Here is a 201-residue protein sequence, read N- to C-terminus: Large ribosomal subunit protein uL4 (201 aa).

Residues 44-68 (KAQKTRSEVAGTTKKSKKQKGGGAR) are disordered.

The protein belongs to the universal ribosomal protein uL4 family. As to quaternary structure, part of the 50S ribosomal subunit.

Its function is as follows. One of the primary rRNA binding proteins, this protein initially binds near the 5'-end of the 23S rRNA. It is important during the early stages of 50S assembly. It makes multiple contacts with different domains of the 23S rRNA in the assembled 50S subunit and ribosome. Forms part of the polypeptide exit tunnel. The sequence is that of Large ribosomal subunit protein uL4 from Xanthomonas oryzae pv. oryzae (strain MAFF 311018).